A 197-amino-acid chain; its full sequence is Shikimate kinase (197 aa).

Position 15 to 20 (15 to 20 (GSGKSS)) interacts with ATP. S19 contacts Mg(2+). Substrate contacts are provided by D37, R61, and G83. R121 provides a ligand contact to ATP. R148 provides a ligand contact to substrate.

This sequence belongs to the shikimate kinase family. Monomer. Mg(2+) is required as a cofactor.

The protein localises to the cytoplasm. The enzyme catalyses shikimate + ATP = 3-phosphoshikimate + ADP + H(+). The protein operates within metabolic intermediate biosynthesis; chorismate biosynthesis; chorismate from D-erythrose 4-phosphate and phosphoenolpyruvate: step 5/7. In terms of biological role, catalyzes the specific phosphorylation of the 3-hydroxyl group of shikimic acid using ATP as a cosubstrate. The protein is Shikimate kinase of Chlorobium phaeovibrioides (strain DSM 265 / 1930) (Prosthecochloris vibrioformis (strain DSM 265)).